The sequence spans 254 residues: Alcohol dehydrogenase 2 (254 aa).

10-33 (FVAGLGGIGFDTSREIVKSGPKNL) is a binding site for NAD(+). S138 is a substrate binding site. Y151 acts as the Proton acceptor in catalysis.

This sequence belongs to the short-chain dehydrogenases/reductases (SDR) family. Homodimer.

The catalysed reaction is a primary alcohol + NAD(+) = an aldehyde + NADH + H(+). The enzyme catalyses a secondary alcohol + NAD(+) = a ketone + NADH + H(+). In Drosophila buzzatii (Fruit fly), this protein is Alcohol dehydrogenase 2 (Adh2).